The sequence spans 337 residues: NADH-quinone oxidoreductase subunit H (337 aa).

A run of 9 helical transmembrane segments spans residues 9-29, 50-70, 82-102, 115-135, 161-181, 186-206, 245-265, 273-293, and 313-333; these read GIPL…LLLV, PNVV…KFVF, GIFL…WAVI, VGIL…IMAG, IGFV…TAIV, TIWY…SALA, SILL…LPPI, VPGV…FAMV, and FLPI…GFDI.

The protein belongs to the complex I subunit 1 family. In terms of assembly, NDH-1 is composed of 14 different subunits. Subunits NuoA, H, J, K, L, M, N constitute the membrane sector of the complex.

The protein resides in the cell inner membrane. It carries out the reaction a quinone + NADH + 5 H(+)(in) = a quinol + NAD(+) + 4 H(+)(out). In terms of biological role, NDH-1 shuttles electrons from NADH, via FMN and iron-sulfur (Fe-S) centers, to quinones in the respiratory chain. The immediate electron acceptor for the enzyme in this species is believed to be ubiquinone. Couples the redox reaction to proton translocation (for every two electrons transferred, four hydrogen ions are translocated across the cytoplasmic membrane), and thus conserves the redox energy in a proton gradient. This subunit may bind ubiquinone. The sequence is that of NADH-quinone oxidoreductase subunit H from Parvibaculum lavamentivorans (strain DS-1 / DSM 13023 / NCIMB 13966).